The following is a 143-amino-acid chain: 3-hydroxyacyl-[acyl-carrier-protein] dehydratase FabZ (143 aa).

His-48 is an active-site residue.

Belongs to the thioester dehydratase family. FabZ subfamily.

The protein localises to the cytoplasm. The catalysed reaction is a (3R)-hydroxyacyl-[ACP] = a (2E)-enoyl-[ACP] + H2O. Functionally, involved in unsaturated fatty acids biosynthesis. Catalyzes the dehydration of short chain beta-hydroxyacyl-ACPs and long chain saturated and unsaturated beta-hydroxyacyl-ACPs. The polypeptide is 3-hydroxyacyl-[acyl-carrier-protein] dehydratase FabZ (Roseiflexus castenholzii (strain DSM 13941 / HLO8)).